The sequence spans 77 residues: Small ribosomal subunit protein bS20 (77 aa).

The tract at residues 47–77 (ASSSIDKAESKGLIHKNKASRDKARLAAKLG) is disordered.

Belongs to the bacterial ribosomal protein bS20 family.

Binds directly to 16S ribosomal RNA. The chain is Small ribosomal subunit protein bS20 from Streptococcus pyogenes serotype M1.